The primary structure comprises 1331 residues: ABC multidrug transporter MDR2 (1331 aa).

2 stretches are compositionally biased toward basic and acidic residues: residues 1–20 (MVEVSEKPNTQDDGVSKQEN) and 31–41 (SDKEKVAKKGN). Residues 1–51 (MVEVSEKPNTQDDGVSKQENRNPASSSSSTSDKEKVAKKGNSDATKSSTPE) form a disordered region. 4 consecutive transmembrane segments (helical) span residues 93 to 113 (MIFLAIVSLASIAAGAALPLF), 147 to 167 (YFVYLGIAQFILLYVSTVGFI), 219 to 239 (KVGLTLTALSTFFSAFIIGYV), and 242 to 262 (WKLALICSSTIVAMILVMGGI). The region spanning 97–387 (AIVSLASIAA…VAPNTQAFAS (291 aa)) is the ABC transmembrane type-1 1 domain. Asn293 carries an N-linked (GlcNAc...) asparagine glycan. The next 2 membrane-spanning stretches (helical) occupy residues 325-345 (LGIMFGSMMAIMYSNYGLGFW) and 358-378 (LSAIVNILLAIVIGSFSIGNV). Residues 422–667 (IEFRGIKHIY…KGTYLQLVEA (246 aa)) form the ABC transporter 1 domain. 457-464 (GPSGSGKS) contacts ATP. Residue Asn529 is glycosylated (N-linked (GlcNAc...) asparagine). Transmembrane regions (helical) follow at residues 762-782 (LCGFFFAVLSGAGQPVQSVFF) and 810-830 (FLMLGLVQLVTQSAQGVIFAI). The ABC transmembrane type-1 2 domain maps to 764-1051 (GFFFAVLSGA…VFSFSPDMGK (288 aa)). Residue Asn860 is glycosylated (N-linked (GlcNAc...) asparagine). Transmembrane regions (helical) follow at residues 884–904 (LGTILMVSTTLIVALTVALAF), 910–930 (LVCISTVPVLLLCGFYRFWIL), 995–1015 (ASQSFSFFCLALGFWYGGGLL), and 1025–1045 (FFLCISCVIFGSQSAGIVFSF). The 239-residue stretch at 1086–1324 (IEFRDVHFRY…KGRYYELVHM (239 aa)) folds into the ABC transporter 2 domain. The N-linked (GlcNAc...) asparagine glycan is linked to Asn1108. 1121–1128 (GPSGCGKS) provides a ligand contact to ATP.

The protein belongs to the ABC transporter superfamily. ABCB family. Multidrug resistance exporter (TC 3.A.1.201) subfamily.

The protein localises to the cell membrane. The catalysed reaction is itraconazole(in) + ATP + H2O = itraconazole(out) + ADP + phosphate + H(+). Functionally, pleiotropic ABC efflux transporter that may be involved in the modulation susceptibility to a wide range of unrelated cytotoxic compounds, including terbinafine, 4-nitroquinoline N-oxide, and ethidium bromide. May play a role in pathogenicity. The sequence is that of ABC multidrug transporter MDR2 from Trichophyton interdigitale (strain MR816).